We begin with the raw amino-acid sequence, 420 residues long: Argininosuccinate synthase (420 aa).

ATP is bound at residue 11-19; the sequence is AFSGGLDTT. Residue Y88 participates in L-citrulline binding. Residue G118 coordinates ATP. L-aspartate contacts are provided by T120, N124, and D125. L-citrulline is bound at residue N124. 5 residues coordinate L-citrulline: R128, S174, S183, E257, and Y269. A disordered region spans residues 401–420; the sequence is KGAAVTDGSGDHAASEDTEE. Basic and acidic residues predominate over residues 409–420; it reads SGDHAASEDTEE.

It belongs to the argininosuccinate synthase family. Type 1 subfamily. In terms of assembly, homotetramer.

The protein localises to the cytoplasm. The enzyme catalyses L-citrulline + L-aspartate + ATP = 2-(N(omega)-L-arginino)succinate + AMP + diphosphate + H(+). It functions in the pathway amino-acid biosynthesis; L-arginine biosynthesis; L-arginine from L-ornithine and carbamoyl phosphate: step 2/3. The polypeptide is Argininosuccinate synthase (Haloarcula marismortui (strain ATCC 43049 / DSM 3752 / JCM 8966 / VKM B-1809) (Halobacterium marismortui)).